Reading from the N-terminus, the 347-residue chain is tRNA N6-adenosine threonylcarbamoyltransferase (347 aa).

Residues His115 and His119 each coordinate Fe cation. Residues 137–141 (LASGG), Asp170, Gly183, and Asn281 each bind substrate. Asp309 lines the Fe cation pocket.

This sequence belongs to the KAE1 / TsaD family. Fe(2+) serves as cofactor.

It is found in the cytoplasm. It catalyses the reaction L-threonylcarbamoyladenylate + adenosine(37) in tRNA = N(6)-L-threonylcarbamoyladenosine(37) in tRNA + AMP + H(+). Its function is as follows. Required for the formation of a threonylcarbamoyl group on adenosine at position 37 (t(6)A37) in tRNAs that read codons beginning with adenine. Is involved in the transfer of the threonylcarbamoyl moiety of threonylcarbamoyl-AMP (TC-AMP) to the N6 group of A37, together with TsaE and TsaB. TsaD likely plays a direct catalytic role in this reaction. The chain is tRNA N6-adenosine threonylcarbamoyltransferase from Methylorubrum populi (strain ATCC BAA-705 / NCIMB 13946 / BJ001) (Methylobacterium populi).